The sequence spans 120 residues: uncharacterized protein (120 aa).

An N-terminal signal peptide occupies residues methionine 1–serine 16.

This is an uncharacterized protein from Acheta domesticus (House cricket).